A 387-amino-acid polypeptide reads, in one-letter code: MSDYLFTSESVGEGHPDKVADQISDAILDAILAQDKHSRVAAETLCNTGLVVLAGEITTNANVDYIQVARDTIKRIGYDNTEYGIDYKGCAVLVAYDKQSPDIAQGVNAAYDDNLGQGAGDQGLMFGYACDETPSLMPLPIYLSHRMVERQAMLRKDGRLPWARPDAKSQVTIRYVDGKPHSIDTVVLSTQHSPDISLEDLREATIEQIIKPVLPKELIKGDIKYLVNPTGRFVVGGPQGDCGLTGRKIIVDTYGGAAPHGGGAFSGKDPSKVDRSAAYATRYVAKNIVAAGLASRCLVQVSYAIGVAEPTSIMVETYGTGKVSNETLTALVRKHFDLRPKGIVNMLDLLRPIYQKTAAYGHFGRDEPEFTWEATDRANLLKSDAGL.

H15 contacts ATP. Mg(2+) is bound at residue D17. Residue E43 coordinates K(+). The L-methionine site is built by E56 and Q99. The segment at 99-109 (QSPDIAQGVNA) is flexible loop. Residues 166–168 (DAK), 232–233 (RF), D241, 247–248 (RK), A264, and K268 each bind ATP. Position 241 (D241) interacts with L-methionine. Position 272 (K272) interacts with L-methionine.

This sequence belongs to the AdoMet synthase family. As to quaternary structure, homotetramer; dimer of dimers. Requires Mg(2+) as cofactor. K(+) serves as cofactor.

It is found in the cytoplasm. The enzyme catalyses L-methionine + ATP + H2O = S-adenosyl-L-methionine + phosphate + diphosphate. The protein operates within amino-acid biosynthesis; S-adenosyl-L-methionine biosynthesis; S-adenosyl-L-methionine from L-methionine: step 1/1. In terms of biological role, catalyzes the formation of S-adenosylmethionine (AdoMet) from methionine and ATP. The overall synthetic reaction is composed of two sequential steps, AdoMet formation and the subsequent tripolyphosphate hydrolysis which occurs prior to release of AdoMet from the enzyme. In Dechloromonas aromatica (strain RCB), this protein is S-adenosylmethionine synthase.